We begin with the raw amino-acid sequence, 101 residues long: Large ribosomal subunit protein uL24 (101 aa).

It belongs to the universal ribosomal protein uL24 family. Part of the 50S ribosomal subunit.

Its function is as follows. One of two assembly initiator proteins, it binds directly to the 5'-end of the 23S rRNA, where it nucleates assembly of the 50S subunit. Functionally, one of the proteins that surrounds the polypeptide exit tunnel on the outside of the subunit. The polypeptide is Large ribosomal subunit protein uL24 (Borrelia garinii subsp. bavariensis (strain ATCC BAA-2496 / DSM 23469 / PBi) (Borreliella bavariensis)).